The primary structure comprises 64 residues: Large ribosomal subunit protein bL35c (64 aa).

The protein belongs to the bacterial ribosomal protein bL35 family.

The protein localises to the plastid. It is found in the chloroplast. The chain is Large ribosomal subunit protein bL35c from Thalassiosira pseudonana (Marine diatom).